A 168-amino-acid polypeptide reads, in one-letter code: Crossover junction endodeoxyribonuclease RuvC (168 aa).

Residues Asp-8, Glu-68, and Asp-140 contribute to the active site. Positions 8, 68, and 140 each coordinate Mg(2+).

It belongs to the RuvC family. As to quaternary structure, homodimer which binds Holliday junction (HJ) DNA. The HJ becomes 2-fold symmetrical on binding to RuvC with unstacked arms; it has a different conformation from HJ DNA in complex with RuvA. In the full resolvosome a probable DNA-RuvA(4)-RuvB(12)-RuvC(2) complex forms which resolves the HJ. Mg(2+) serves as cofactor.

It localises to the cytoplasm. The catalysed reaction is Endonucleolytic cleavage at a junction such as a reciprocal single-stranded crossover between two homologous DNA duplexes (Holliday junction).. Its function is as follows. The RuvA-RuvB-RuvC complex processes Holliday junction (HJ) DNA during genetic recombination and DNA repair. Endonuclease that resolves HJ intermediates. Cleaves cruciform DNA by making single-stranded nicks across the HJ at symmetrical positions within the homologous arms, yielding a 5'-phosphate and a 3'-hydroxyl group; requires a central core of homology in the junction. The consensus cleavage sequence is 5'-(A/T)TT(C/G)-3'. Cleavage occurs on the 3'-side of the TT dinucleotide at the point of strand exchange. HJ branch migration catalyzed by RuvA-RuvB allows RuvC to scan DNA until it finds its consensus sequence, where it cleaves and resolves the cruciform DNA. The chain is Crossover junction endodeoxyribonuclease RuvC from Lawsonia intracellularis (strain PHE/MN1-00).